The sequence spans 184 residues: Probable RNA 2'-phosphotransferase (184 aa).

Belongs to the KptA/TPT1 family.

Removes the 2'-phosphate from RNA via an intermediate in which the phosphate is ADP-ribosylated by NAD followed by a presumed transesterification to release the RNA and generate ADP-ribose 1''-2''-cyclic phosphate (APPR&gt;P). May function as an ADP-ribosylase. The polypeptide is Probable RNA 2'-phosphotransferase (Escherichia coli O8 (strain IAI1)).